The following is a 288-amino-acid chain: Pantothenate synthetase (288 aa).

30 to 37 (MGFLHEGH) is an ATP binding site. H37 functions as the Proton donor in the catalytic mechanism. (R)-pantoate is bound at residue Q61. A beta-alanine-binding site is contributed by Q61. ATP is bound at residue 147 to 150 (GLKD). Residue Q153 coordinates (R)-pantoate. ATP-binding positions include V176 and 184–187 (KSSR).

The protein belongs to the pantothenate synthetase family. In terms of assembly, homodimer.

It localises to the cytoplasm. It carries out the reaction (R)-pantoate + beta-alanine + ATP = (R)-pantothenate + AMP + diphosphate + H(+). The protein operates within cofactor biosynthesis; (R)-pantothenate biosynthesis; (R)-pantothenate from (R)-pantoate and beta-alanine: step 1/1. In terms of biological role, catalyzes the condensation of pantoate with beta-alanine in an ATP-dependent reaction via a pantoyl-adenylate intermediate. The polypeptide is Pantothenate synthetase (Bacillus pumilus (strain SAFR-032)).